Consider the following 528-residue polypeptide: Putative pumilio homolog 10 (528 aa).

Residues 188 to 528 form the PUM-HD domain; it reads EGSGASYPDE…KIFSKTILKK (341 aa). Pumilio repeat units lie at residues 213 to 248, 249 to 284, 285 to 323, 325 to 360, 361 to 396, 397 to 433, 434 to 465, and 466 to 503; these read EIYG…VIFL, EIID…MIVS, VLTS…ALVK, ALEP…FVVE, AATE…RLVA, EISR…LPFR, THCI…EIVR, and ELLS…RLVE.

The protein resides in the cytoplasm. Its function is as follows. Sequence-specific RNA-binding protein that regulates translation and mRNA stability by binding the 3'-UTR of target mRNAs. This Arabidopsis thaliana (Mouse-ear cress) protein is Putative pumilio homolog 10 (APUM10).